A 421-amino-acid chain; its full sequence is Tyrosine-protein phosphatase non-receptor type 20 (421 aa).

Residues 1–58 (MSSPGNVRQKHGRDNDEHEGDSDDLNLQKSLPSSSQQKTPTKPVFGNKVNSESVKTSH) are disordered. Residues 27-41 (LQKSLPSSSQQKTPT) are compositionally biased toward low complexity. A compositionally biased stretch (polar residues) spans 48–58 (KVNSESVKTSH). Residue S76 is modified to Phosphoserine. The disordered stretch occupies residues 93 to 116 (RWSSVDPESAGPSKTVSTVLSESS). Residues 104-116 (PSKTVSTVLSESS) are compositionally biased toward polar residues. S122 carries the post-translational modification Phosphoserine. Residues 160–413 (IIREFLELEE…QFCYEIVLEV (254 aa)) form the Tyrosine-protein phosphatase domain. Residues D324, 354 to 360 (CSAGVGR), and Q398 contribute to the substrate site. C354 functions as the Phosphocysteine intermediate in the catalytic mechanism.

Belongs to the protein-tyrosine phosphatase family. Non-receptor class subfamily.

The protein resides in the nucleus. Its subcellular location is the cytoplasm. It localises to the cytoskeleton. It is found in the microtubule organizing center. The protein localises to the centrosome. The catalysed reaction is O-phospho-L-tyrosyl-[protein] + H2O = L-tyrosyl-[protein] + phosphate. Tyrosine-protein phosphatase targeted to sites of actin polymerization in response of varied extracellular stimuli. Has tyrosine phosphatase activity towards various tyrosyl phosphorylated substrates. In Rattus norvegicus (Rat), this protein is Tyrosine-protein phosphatase non-receptor type 20 (Ptpn20).